Consider the following 430-residue polypeptide: Glutamine synthetase, chloroplastic/mitochondrial (430 aa).

A chloroplast and mitochondrion-targeting transit peptide spans 1-45; that stretch reads MAQILAASPTCQMRVPKHSSVIASSSKLWSSVVLKQKKQSNNKVR. The GS beta-grasp domain maps to 77–157; it reads IIAEYIWIGG…VICDTWTPAG (81 aa). A disordered region spans residues 97–122; that stretch reads TIEKPVEDPSELPKWNYDGSSTGQAP. The residue at position 106 (Ser-106) is a Phosphoserine. Residues 161 to 430 enclose the GS catalytic domain; it reads PTNKRAKAAE…LAAQKLSLNV (270 aa).

Belongs to the glutamine synthetase family. In terms of assembly, homooctamer. As to expression, expressed in mesophyll and epidermal cells of leaves.

The protein localises to the plastid. It localises to the chloroplast. The protein resides in the mitochondrion. The enzyme catalyses L-glutamate + NH4(+) + ATP = L-glutamine + ADP + phosphate + H(+). Functionally, the light-modulated chloroplast/mitochondrial enzyme, encoded by a nuclear gene and expressed primarily in leaves, is responsible for the reassimilation of the ammonia generated by photorespiration. This chain is Glutamine synthetase, chloroplastic/mitochondrial (GLN2), found in Arabidopsis thaliana (Mouse-ear cress).